Here is a 105-residue protein sequence, read N- to C-terminus: Small ribosomal subunit protein bS20 (105 aa).

It belongs to the bacterial ribosomal protein bS20 family.

In terms of biological role, binds directly to 16S ribosomal RNA. The sequence is that of Small ribosomal subunit protein bS20 from Moorella thermoacetica (strain ATCC 39073 / JCM 9320).